The primary structure comprises 266 residues: Proline-rich protein 23A (266 aa).

A compositionally biased stretch (low complexity) spans 1-18 (MGSRPRSPSAFPAPWWGQ). 2 disordered regions span residues 1-47 (MGSR…SLED) and 197-266 (EPCA…LFQE). A compositionally biased stretch (pro residues) spans 227–238 (PSSPLQPLPPSP). Basic residues predominate over residues 255–266 (PPCKARRRLFQE).

The protein belongs to the PRR23 family.

This Homo sapiens (Human) protein is Proline-rich protein 23A (PRR23A).